The sequence spans 217 residues: Thiopurine S-methyltransferase (217 aa).

The S-adenosyl-L-methionine site is built by Trp-11, Leu-46, Glu-67, and Arg-122.

It belongs to the class I-like SAM-binding methyltransferase superfamily. TPMT family.

It is found in the cytoplasm. The enzyme catalyses S-adenosyl-L-methionine + a thiopurine = S-adenosyl-L-homocysteine + a thiopurine S-methylether.. The chain is Thiopurine S-methyltransferase from Vibrio vulnificus (strain YJ016).